A 281-amino-acid polypeptide reads, in one-letter code: Putative integrase/recombinase y4rD (281 aa).

Residues 5 to 98 (LLLAPLLESY…AIRSFFHHVA (94 aa)) enclose the Core-binding (CB) domain. Residues 122-281 (EVTHHLTKAE…TMSGTENASV (160 aa)) enclose the Tyr recombinase domain. Catalysis depends on residues Arg-162, Lys-188, His-262, and Arg-265.

The protein belongs to the 'phage' integrase family.

Its function is as follows. Seems to be non-functional. In Sinorhizobium fredii (strain NBRC 101917 / NGR234), this protein is Putative integrase/recombinase y4rD.